A 183-amino-acid chain; its full sequence is Streptavidin-V2 (183 aa).

Residues 1–24 (MRKIVVAAIAVSLTTVGITASASA) form the signal peptide. Residues 37–159 (AEAGITGTWY…GHDTFTKVKP (123 aa)) enclose the Avidin-like domain. Biotin-binding residues include Tyr67 and Tyr78. Positions 83 to 85 (RYD) match the Cell attachment site; atypical motif. Biotin is bound by residues Trp116, Trp132, and Trp144.

The protein belongs to the avidin/streptavidin family. As to quaternary structure, homotetramer.

The protein resides in the secreted. Its function is as follows. The biological function of streptavidin is not known. Forms a strong non-covalent specific complex with biotin (one molecule of biotin per subunit of streptavidin). The protein is Streptavidin-V2 of Streptomyces violaceus (Streptomyces venezuelae).